The primary structure comprises 730 residues: Polyribonucleotide nucleotidyltransferase (730 aa).

Aspartate 489 and aspartate 495 together coordinate Mg(2+). In terms of domain architecture, KH spans 556–615; the sequence is PKIDTIKVDVDKIKIVIGKGGETIDKIIEETGVKIDIDEDGNIAIYSSDQEAINRTKEII. The S1 motif domain maps to 625-693; it reads GEIYEAEVVR…DKGRIDASMK (69 aa). The tract at residues 691 to 730 is disordered; the sequence is SMKALLPRPPRSEKSNKEDHQSVRHHGSPKDDKGKEKYDK. A compositionally biased stretch (basic and acidic residues) spans 700–730; it reads PRSEKSNKEDHQSVRHHGSPKDDKGKEKYDK.

This sequence belongs to the polyribonucleotide nucleotidyltransferase family. The cofactor is Mg(2+).

Its subcellular location is the cytoplasm. It carries out the reaction RNA(n+1) + phosphate = RNA(n) + a ribonucleoside 5'-diphosphate. Involved in mRNA degradation. Catalyzes the phosphorolysis of single-stranded polyribonucleotides processively in the 3'- to 5'-direction. In Streptococcus mutans serotype c (strain ATCC 700610 / UA159), this protein is Polyribonucleotide nucleotidyltransferase.